Here is a 479-residue protein sequence, read N- to C-terminus: Glucan 1,3-beta-glucosidase 2 (479 aa).

The first 21 residues, 1–21 (MMLFLIHLMALCCMFVAEVAC), serve as a signal peptide directing secretion. Asparagine 25, asparagine 29, asparagine 63, asparagine 104, asparagine 187, and asparagine 193 each carry an N-linked (GlcNAc...) asparagine glycan. Glutamate 227 functions as the Proton donor in the catalytic mechanism. 3 N-linked (GlcNAc...) asparagine glycosylation sites follow: asparagine 254, asparagine 285, and asparagine 288. Catalysis depends on histidine 306, which acts as the Nucleophile. N-linked (GlcNAc...) asparagine glycans are attached at residues asparagine 318 and asparagine 451. A lipid anchor (GPI-anchor amidated serine) is attached at serine 456. Residues 457–479 (SASAIASNKMTLLLAFLLVILVI) constitute a propeptide, removed in mature form.

The protein belongs to the glycosyl hydrolase 5 (cellulase A) family. Predicted to be a substrate for cleavage by KEX2.

The protein resides in the cell membrane. It is found in the secreted. It catalyses the reaction Successive hydrolysis of beta-D-glucose units from the non-reducing ends of (1-&gt;3)-beta-D-glucans, releasing alpha-glucose.. In terms of biological role, beta-glucanases participate in the metabolism of beta-glucan, the main structural component of the cell wall. EXG2 is not heavily involved in the exoglucanase function of the adhesion process. The protein is Glucan 1,3-beta-glucosidase 2 (EXG2) of Candida albicans (strain SC5314 / ATCC MYA-2876) (Yeast).